Consider the following 563-residue polypeptide: 3-oxosteroid 1-dehydrogenase (563 aa).

Residue 7–36 participates in FAD binding; it reads DVVVVGSGAAGMVAALVAAHRGLSTVVVEK.

Belongs to the FAD-dependent oxidoreductase 2 family. 3-oxosteroid dehydrogenase subfamily. FAD serves as cofactor.

It carries out the reaction a 3-oxosteroid + A = a 3-oxo-Delta(1)-steroid + AH2. The catalysed reaction is a 3-oxo-Delta(4)-steroid + A = a 3-oxo-Delta(1,4)-steroid + AH2. It catalyses the reaction 3-oxochol-4-en-22-oyl-CoA + NAD(+) = 3-oxochola-1,4-dien-22-oyl-CoA + NADH + H(+). Functionally, involved in the degradation of cholesterol. Catalyzes the elimination of the C-1 and C-2 hydrogen atoms of the A-ring from the polycyclic ring structure of 3-ketosteroids. Has a clear preference for 3-ketosteroids with a saturated A-ring, displaying highest activity on 5alpha-AD (5alpha-androstane-3,17-dione) and 5alpha-T (5alpha-testosterone, also known as 17beta-hydroxy-5alpha-androstane-3-one). Is also involved in the formation of 3-keto-1,4-diene-steroid from 3-keto-4-ene-steroid. Catalyzes the conversion of 3-oxo-23,24-bisnorchol-4-en-22-oyl-coenzyme A thioester (4-BNC-CoA) to 3-oxo-23,24-bisnorchola-1,4-dien-22-oyl-coenzyme A thioester (1,4-BNC-CoA). The chain is 3-oxosteroid 1-dehydrogenase (kstD) from Mycobacterium tuberculosis (strain ATCC 25618 / H37Rv).